The primary structure comprises 58 residues: Large ribosomal subunit protein bL32 (58 aa).

The protein belongs to the bacterial ribosomal protein bL32 family.

The protein is Large ribosomal subunit protein bL32 of Anaplasma phagocytophilum (strain HZ).